We begin with the raw amino-acid sequence, 778 residues long: MNKKILETLEFDKVKALFEPHLLTEQGLEQLRQLAPTAKADKIKQAFAEMKEMQALFVEQPHFTILSTKEIAGVCKRLEMRADLNIEEFLLLKRVLLASRELQNFYANLENVSLEELALWFEKLHDFPQLQGNLQAFNDAGFIENFASEELARIRRKIHDSESQVRDVLQDLLKQKAQMLTEGIVASRNGRQVLPVKNTYRNKIAGVVHDISASGNTVYIEPREVVKLSEEIASLRADERYEMLRILQEISERVRPHAAEIANDAWIIGHLDLIRAKVRFIQERQAVVPQLSENQEIQLLHVCHPLVKNAVANDVYFGQDLTAIVITGPNTGGKTIMLKTLGLTQVMAQSGLPILADKGSRVGIFEEIFADIGDEQSIEQSLSTFSSHMTNIVDILGKVNQHSLLLLDELGAGTDPQEGAALAMAILEDLRLRQIKTMATTHYPELKAYGIETAFVQNASMEFDTATLRPTYRFMQGVPGRSNAFEIAKRLGLSEVIVGDASQQIDQDNDVNRIIEQLEEQTLESRKRLDNIREVEQENLKMNRALKKLYNELNREKETELNKAREQAAEIVDMALSESDQILKNLHSKSQLKPHEIIEAKAKLKKLAPEKVDLSKNKVLQKAKKKRAPKVGDDIVVLSYGQRGTLTSQLKDGRWEAQVGLIKMTLEEKEFDLVQAQQEKPVKKKQVNVVKRTSGRGPQARLDLRGKRYEEAMNELDTFIDQALLNNMAQVDIIHGIGTGVIREGVTKYLQRNKHVKSFGYAPQNAGGSGATIVTFKG.

Glycine 328–threonine 335 contacts ATP. Positions leucine 702 to lysine 777 constitute a Smr domain.

The protein belongs to the DNA mismatch repair MutS family. MutS2 subfamily. In terms of assembly, homodimer. Binds to stalled ribosomes, contacting rRNA.

In terms of biological role, endonuclease that is involved in the suppression of homologous recombination and thus may have a key role in the control of bacterial genetic diversity. Its function is as follows. Acts as a ribosome collision sensor, splitting the ribosome into its 2 subunits. Detects stalled/collided 70S ribosomes which it binds and splits by an ATP-hydrolysis driven conformational change. Acts upstream of the ribosome quality control system (RQC), a ribosome-associated complex that mediates the extraction of incompletely synthesized nascent chains from stalled ribosomes and their subsequent degradation. Probably generates substrates for RQC. The chain is Endonuclease MutS2 from Streptococcus pneumoniae (strain ATCC 700669 / Spain 23F-1).